We begin with the raw amino-acid sequence, 346 residues long: Probable choline kinase 1 (346 aa).

Residues arginine 73, glutamine 210, and aspartate 227 each contribute to the ATP site.

It belongs to the choline/ethanolamine kinase family. As to expression, expressed in roots. Expressed at low levels in cauline leaves and flowers.

The catalysed reaction is choline + ATP = phosphocholine + ADP + H(+). Its pathway is phospholipid metabolism; phosphatidylcholine biosynthesis; phosphocholine from choline: step 1/1. Involved in phospholipid biosynthesis. Catalyzes the first step in phosphatidylcholine biosynthesis. This chain is Probable choline kinase 1 (CK1), found in Arabidopsis thaliana (Mouse-ear cress).